Here is a 962-residue protein sequence, read N- to C-terminus: Glycine dehydrogenase (decarboxylating) (962 aa).

Residue Lys-709 is modified to N6-(pyridoxal phosphate)lysine.

Belongs to the GcvP family. As to quaternary structure, the glycine cleavage system is composed of four proteins: P, T, L and H. It depends on pyridoxal 5'-phosphate as a cofactor.

It catalyses the reaction N(6)-[(R)-lipoyl]-L-lysyl-[glycine-cleavage complex H protein] + glycine + H(+) = N(6)-[(R)-S(8)-aminomethyldihydrolipoyl]-L-lysyl-[glycine-cleavage complex H protein] + CO2. The glycine cleavage system catalyzes the degradation of glycine. The P protein binds the alpha-amino group of glycine through its pyridoxal phosphate cofactor; CO(2) is released and the remaining methylamine moiety is then transferred to the lipoamide cofactor of the H protein. The sequence is that of Glycine dehydrogenase (decarboxylating) from Shewanella baltica (strain OS195).